A 467-amino-acid chain; its full sequence is Fumarate hydratase class II (467 aa).

Substrate contacts are provided by residues 98 to 100, Arg126, 129 to 132, 139 to 141, and Thr187; these read SGT, HPND, and SSN. The Proton donor/acceptor role is filled by His188. The active site involves Ser318. Substrate is bound by residues Ser319 and 324–326; that span reads KVN.

The protein belongs to the class-II fumarase/aspartase family. Fumarase subfamily. As to quaternary structure, homotetramer.

The protein localises to the cytoplasm. The catalysed reaction is (S)-malate = fumarate + H2O. The protein operates within carbohydrate metabolism; tricarboxylic acid cycle; (S)-malate from fumarate: step 1/1. In terms of biological role, involved in the TCA cycle. Catalyzes the stereospecific interconversion of fumarate to L-malate. This is Fumarate hydratase class II from Shigella flexneri.